A 346-amino-acid polypeptide reads, in one-letter code: MDEMHSSDTLLLRTPKSKKKIGLVIPSTPSKKCKYSSGFIAEDTTPSKRFRLYQAKFKTSSKNVKAQTLSVSIKKNQGEITNPFMTEGYNDYRNIVSPGLSFDNDCFSEHELVSPLSDISSINSTSPDVEKIDSLDPFGVDSFVWNCKPLVNKEALELHRMIHSSFPMSPLESNSDVPLLLPKLKKRLSPVNRSTFKPTRYEPSHRLLKPKKSILTVPAKSLNLIVSSSRGSLNDATIFATEINSTLSNEENKLPAISSIWEKLTIPVNSSIKEKYKKLKDQIYGQASNFGEDEDNEEDNEDDLPDAAVIRGYEFQSGRRDELTQCNELQSTKDYKKVQWAKVLEQ.

The tract at residues 289 to 308 (NFGEDEDNEEDNEDDLPDAA) is disordered. A compositionally biased stretch (acidic residues) spans 291–305 (GEDEDNEEDNEDDLP).

Its subcellular location is the nucleus. Its function is as follows. Probable transcription factor required for superficial pseudohyphal development in response to nitrogen starvation. The chain is Superficial pseudohyphal growth protein 1 (SFG1) from Saccharomyces cerevisiae (strain ATCC 204508 / S288c) (Baker's yeast).